The following is an 82-amino-acid chain: RNA-binding protein YbxF (82 aa).

The protein belongs to the eukaryotic ribosomal protein eL8 family.

This Geobacillus stearothermophilus (Bacillus stearothermophilus) protein is RNA-binding protein YbxF.